A 182-amino-acid chain; its full sequence is ATP-dependent protease subunit HslV (182 aa).

Residue T6 is part of the active site. Residues A164, C167, and T170 each contribute to the Na(+) site.

This sequence belongs to the peptidase T1B family. HslV subfamily. As to quaternary structure, a double ring-shaped homohexamer of HslV is capped on each side by a ring-shaped HslU homohexamer. The assembly of the HslU/HslV complex is dependent on binding of ATP.

The protein resides in the cytoplasm. The catalysed reaction is ATP-dependent cleavage of peptide bonds with broad specificity.. Its activity is regulated as follows. Allosterically activated by HslU binding. Protease subunit of a proteasome-like degradation complex believed to be a general protein degrading machinery. This is ATP-dependent protease subunit HslV from Borrelia garinii subsp. bavariensis (strain ATCC BAA-2496 / DSM 23469 / PBi) (Borreliella bavariensis).